The sequence spans 130 residues: MKDWLDQIKWDADGLVPAIAQDHKTGRVLMMAWMNREALSLTAAENRAIYWSRSRGKLWRKGEESGHVQKLHEMRLDCDADVIILMVEQIGDIACHTGRHSCFYRVYEDGEWKTVEPVLKDPHAIYSAGH.

Mg(2+) is bound at residue aspartate 77. Cysteine 78 serves as a coordination point for Zn(2+). Residues aspartate 79 and aspartate 81 each contribute to the Mg(2+) site. Cysteine 95 and cysteine 102 together coordinate Zn(2+).

The protein belongs to the PRA-CH family. As to quaternary structure, homodimer. The cofactor is Mg(2+). Zn(2+) serves as cofactor.

The protein localises to the cytoplasm. It carries out the reaction 1-(5-phospho-beta-D-ribosyl)-5'-AMP + H2O = 1-(5-phospho-beta-D-ribosyl)-5-[(5-phospho-beta-D-ribosylamino)methylideneamino]imidazole-4-carboxamide. Its pathway is amino-acid biosynthesis; L-histidine biosynthesis; L-histidine from 5-phospho-alpha-D-ribose 1-diphosphate: step 3/9. Its function is as follows. Catalyzes the hydrolysis of the adenine ring of phosphoribosyl-AMP. This chain is Phosphoribosyl-AMP cyclohydrolase 1, found in Pseudomonas fluorescens (strain ATCC BAA-477 / NRRL B-23932 / Pf-5).